The following is a 399-amino-acid chain: Methylthioribose kinase (399 aa).

ATP is bound by residues Asn-40, Lys-57, and 111-113 (EDL). A substrate-binding site is contributed by Asp-229. 246–248 (DAE) contacts ATP. Arg-344 provides a ligand contact to substrate.

Belongs to the methylthioribose kinase family. Homodimer.

The catalysed reaction is 5-(methylsulfanyl)-D-ribose + ATP = 5-(methylsulfanyl)-alpha-D-ribose 1-phosphate + ADP + H(+). Its pathway is amino-acid biosynthesis; L-methionine biosynthesis via salvage pathway; S-methyl-5-thio-alpha-D-ribose 1-phosphate from S-methyl-5'-thioadenosine (hydrolase route): step 2/2. In terms of biological role, catalyzes the phosphorylation of methylthioribose into methylthioribose-1-phosphate. This Klebsiella pneumoniae (strain 342) protein is Methylthioribose kinase.